The following is a 490-amino-acid chain: GTPase Der (490 aa).

EngA-type G domains lie at 1–165 (MRIA…QIPV) and 227–400 (LKVA…TIAT). Residues 7–14 (GRPNVGKS), 54–58 (DTGGV), 117–120 (NKAD), 233–240 (GHPNVGKS), 280–284 (DTAGL), and 345–348 (NKWD) contribute to the GTP site. The 85-residue stretch at 401-485 (TKLSTSLVNK…PFDLEYKAKP (85 aa)) folds into the KH-like domain.

The protein belongs to the TRAFAC class TrmE-Era-EngA-EngB-Septin-like GTPase superfamily. EngA (Der) GTPase family. In terms of assembly, associates with the 50S ribosomal subunit.

GTPase that plays an essential role in the late steps of ribosome biogenesis. The protein is GTPase Der of Chlamydia trachomatis serovar L2b (strain UCH-1/proctitis).